The chain runs to 184 residues: MKIAQEIRAGNVIMHGKDPMVVLKTEYSRGGRNSATVRMKLKSLLSNSGTEVVFKADDKMDQIILDKKECTYSYFADPMYAFMDADFNQFEVEAENMGDAISYLEDGMAVEVVFYDGKAISVELPTSLVREVTWTEPAVKGDTSGKVLKPAKLATGFDIQVPIFVAQGDKIEIDTRTHEYRKRV.

It belongs to the elongation factor P family.

It is found in the cytoplasm. The protein operates within protein biosynthesis; polypeptide chain elongation. Involved in peptide bond synthesis. Stimulates efficient translation and peptide-bond synthesis on native or reconstituted 70S ribosomes in vitro. Probably functions indirectly by altering the affinity of the ribosome for aminoacyl-tRNA, thus increasing their reactivity as acceptors for peptidyl transferase. The polypeptide is Elongation factor P (Leptothrix cholodnii (strain ATCC 51168 / LMG 8142 / SP-6) (Leptothrix discophora (strain SP-6))).